The sequence spans 64 residues: Large ribosomal subunit protein bL35 (64 aa).

This sequence belongs to the bacterial ribosomal protein bL35 family.

The sequence is that of Large ribosomal subunit protein bL35 from Shewanella loihica (strain ATCC BAA-1088 / PV-4).